The chain runs to 509 residues: Aldehyde dehydrogenase 1A1 (509 aa).

Residues 175-178 (IPWN), 201-204 (KPAE), 234-235 (GP), 254-255 (GS), and 277-279 (ELG) contribute to the NAD(+) site. The active-site Proton acceptor is E277. The Nucleophile role is filled by C311. NAD(+) contacts are provided by residues 357–361 (EQFQK) and 408–410 (EIF).

This sequence belongs to the aldehyde dehydrogenase family. In terms of assembly, homotetramer.

The protein localises to the cytoplasm. It is found in the cytosol. Its subcellular location is the cell projection. The protein resides in the axon. It catalyses the reaction an aldehyde + NAD(+) + H2O = a carboxylate + NADH + 2 H(+). The enzyme catalyses all-trans-retinal + NAD(+) + H2O = all-trans-retinoate + NADH + 2 H(+). It carries out the reaction 9-cis-retinal + NAD(+) + H2O = 9-cis-retinoate + NADH + 2 H(+). The catalysed reaction is 11-cis-retinal + NAD(+) + H2O = 11-cis-retinoate + NADH + 2 H(+). It catalyses the reaction 13-cis-retinal + NAD(+) + H2O = 13-cis-retinoate + NADH + 2 H(+). The enzyme catalyses 3-deoxyglucosone + NAD(+) + H2O = 2-dehydro-3-deoxy-D-gluconate + NADH + 2 H(+). It carries out the reaction (E)-4-hydroxynon-2-enal + NAD(+) + H2O = (E)-4-hydroxynon-2-enoate + NADH + 2 H(+). The catalysed reaction is malonaldehyde + NAD(+) + H2O = 3-oxopropanoate + NADH + 2 H(+). It catalyses the reaction hexanal + NAD(+) + H2O = hexanoate + NADH + 2 H(+). The enzyme catalyses propanal + NAD(+) + H2O = propanoate + NADH + 2 H(+). It carries out the reaction acetaldehyde + NAD(+) + H2O = acetate + NADH + 2 H(+). The catalysed reaction is benzaldehyde + NAD(+) + H2O = benzoate + NADH + 2 H(+). It catalyses the reaction 4-aminobutanal + NAD(+) + H2O = 4-aminobutanoate + NADH + 2 H(+). It functions in the pathway cofactor metabolism; retinol metabolism. Functionally, cytosolic dehydrogenase that catalyzes the irreversible oxidation of a wide range of aldehydes to their corresponding carboxylic acid. Functions downstream of retinol dehydrogenases and catalyzes the oxidation of retinaldehyde into retinoic acid, the second step in the oxidation of retinol/vitamin A into retinoic acid. This pathway is crucial to control the levels of retinol and retinoic acid, two important molecules which excess can be teratogenic and cytotoxic. Also oxidizes aldehydes resulting from lipid peroxidation like (E)-4-hydroxynon-2-enal/HNE, malonaldehyde and hexanal that form protein adducts and are highly cytotoxic. By participating for instance to the clearance of (E)-4-hydroxynon-2-enal/HNE in the lens epithelium prevents the formation of HNE-protein adducts and lens opacification. Also functions downstream of fructosamine-3-kinase in the fructosamine degradation pathway by catalyzing the oxidation of 3-deoxyglucosone, the carbohydrate product of fructosamine 3-phosphate decomposition, which is itself a potent glycating agent that may react with lysine and arginine side-chains of proteins. Also has an aminobutyraldehyde dehydrogenase activity and is probably part of an alternative pathway for the biosynthesis of GABA/4-aminobutanoate in midbrain, thereby playing a role in GABAergic synaptic transmission. The sequence is that of Aldehyde dehydrogenase 1A1 from Gallus gallus (Chicken).